A 209-amino-acid polypeptide reads, in one-letter code: Octanoyltransferase (209 aa).

A BPL/LPL catalytic domain is found at 30–209 (DHKPEIIYLV…IQTEFNKIFK (180 aa)). Substrate contacts are provided by residues 69–76 (RGGKFTFH), 143–145 (AIG), and 156–158 (GVA). Cys-174 functions as the Acyl-thioester intermediate in the catalytic mechanism.

This sequence belongs to the LipB family.

It localises to the cytoplasm. It carries out the reaction octanoyl-[ACP] + L-lysyl-[protein] = N(6)-octanoyl-L-lysyl-[protein] + holo-[ACP] + H(+). The protein operates within protein modification; protein lipoylation via endogenous pathway; protein N(6)-(lipoyl)lysine from octanoyl-[acyl-carrier-protein]: step 1/2. Functionally, catalyzes the transfer of endogenously produced octanoic acid from octanoyl-acyl-carrier-protein onto the lipoyl domains of lipoate-dependent enzymes. Lipoyl-ACP can also act as a substrate although octanoyl-ACP is likely to be the physiological substrate. The protein is Octanoyltransferase of Rickettsia conorii (strain ATCC VR-613 / Malish 7).